The primary structure comprises 907 residues: Isoleucine--tRNA ligase (907 aa).

The 'HIGH' region motif lies at 57-67 (PFANGKAHMGS). Glu-549 provides a ligand contact to L-isoleucyl-5'-AMP. Residues 590–594 (KLSKS) carry the 'KMSKS' region motif. Lys-593 is an ATP binding site. Zn(2+) is bound by residues Cys-867, Cys-870, Cys-889, and Cys-892.

This sequence belongs to the class-I aminoacyl-tRNA synthetase family. IleS type 1 subfamily. In terms of assembly, monomer. Zn(2+) serves as cofactor.

The protein resides in the cytoplasm. The catalysed reaction is tRNA(Ile) + L-isoleucine + ATP = L-isoleucyl-tRNA(Ile) + AMP + diphosphate. Its function is as follows. Catalyzes the attachment of isoleucine to tRNA(Ile). As IleRS can inadvertently accommodate and process structurally similar amino acids such as valine, to avoid such errors it has two additional distinct tRNA(Ile)-dependent editing activities. One activity is designated as 'pretransfer' editing and involves the hydrolysis of activated Val-AMP. The other activity is designated 'posttransfer' editing and involves deacylation of mischarged Val-tRNA(Ile). The protein is Isoleucine--tRNA ligase of Methylacidiphilum infernorum (isolate V4) (Methylokorus infernorum (strain V4)).